The following is a 402-amino-acid chain: Acetate kinase (402 aa).

A Mg(2+)-binding site is contributed by N10. Residue K17 participates in ATP binding. R89 lines the substrate pocket. The active-site Proton donor/acceptor is D148. ATP contacts are provided by residues H208–G212, D283–R285, and G334–N338. A Mg(2+)-binding site is contributed by E389.

It belongs to the acetokinase family. Homodimer. Requires Mg(2+) as cofactor. It depends on Mn(2+) as a cofactor.

It is found in the cytoplasm. The enzyme catalyses acetate + ATP = acetyl phosphate + ADP. The protein operates within metabolic intermediate biosynthesis; acetyl-CoA biosynthesis; acetyl-CoA from acetate: step 1/2. Functionally, catalyzes the formation of acetyl phosphate from acetate and ATP. Can also catalyze the reverse reaction. This chain is Acetate kinase, found in Actinobacillus pleuropneumoniae serotype 5b (strain L20).